We begin with the raw amino-acid sequence, 247 residues long: ATP synthase subunit a, chloroplastic (247 aa).

Transmembrane regions (helical) follow at residues 38–58, 95–115, 134–154, 199–219, and 220–240; these read QVLI…TLAV, VPFI…GALL, INTT…AGLT, LVVV…VMFL, and GLFT…AYIG.

Belongs to the ATPase A chain family. F-type ATPases have 2 components, CF(1) - the catalytic core - and CF(0) - the membrane proton channel. CF(1) has five subunits: alpha(3), beta(3), gamma(1), delta(1), epsilon(1). CF(0) has four main subunits: a, b, b' and c.

It is found in the plastid. Its subcellular location is the chloroplast thylakoid membrane. In terms of biological role, key component of the proton channel; it plays a direct role in the translocation of protons across the membrane. In Guizotia abyssinica (Niger), this protein is ATP synthase subunit a, chloroplastic.